The primary structure comprises 61 residues: Small ribosomal subunit protein uS14 (61 aa).

Positions 24, 27, 40, and 43 each coordinate Zn(2+).

It belongs to the universal ribosomal protein uS14 family. Zinc-binding uS14 subfamily. In terms of assembly, part of the 30S ribosomal subunit. Contacts proteins S3 and S10. Zn(2+) serves as cofactor.

Its function is as follows. Binds 16S rRNA, required for the assembly of 30S particles and may also be responsible for determining the conformation of the 16S rRNA at the A site. In Clostridium kluyveri (strain NBRC 12016), this protein is Small ribosomal subunit protein uS14.